We begin with the raw amino-acid sequence, 675 residues long: Glycerophosphocholine phosphodiesterase GPCPD1 (675 aa).

The CBM20 domain occupies 1–115 (MTPSQVTFEI…IIIDDGQFGI (115 aa)). Residues Arg-70 and 88–89 (HK) each bind substrate. A phosphoserine mark is found at Ser-178 and Ser-427. In terms of domain architecture, GP-PDE spans 321-621 (PLDVGHRGAG…DRIYDWMPEQ (301 aa)). Tyr-611 is modified (phosphotyrosine).

This sequence belongs to the glycerophosphoryl diester phosphodiesterase family. In terms of tissue distribution, widely expressed with highest levels in skeletal muscle and heart.

Its subcellular location is the cytoplasm. It is found in the cytosol. It carries out the reaction sn-glycerol 3-phosphocholine + H2O = sn-glycerol 3-phosphate + choline + H(+). Functionally, may be involved in the negative regulation of skeletal muscle differentiation, independently of its glycerophosphocholine phosphodiesterase activity. This is Glycerophosphocholine phosphodiesterase GPCPD1 (Gpcpd1) from Mus musculus (Mouse).